The following is a 438-amino-acid chain: Cell division cycle-associated 7-like protein (438 aa).

An Integrase domain-binding motif 1 (IBM1) motif is present at residues 9–33 (IPKEVADIFNAPSDDEEFVGFQDDV). Phosphoserine is present on serine 21. Positions 55 to 114 (ACLHSKYFTEELRRIFKEDTDSDNEDFEGFTESELNIGSNPELIESELSDGDKTHPMMSD) are PSIP1-binding. Positions 62 to 88 (FTEELRRIFKEDTDSDNEDFEGFTESE) match the Integrase domain-binding motif 2 (IBM2) motif. The tract at residues 72 to 199 (EDTDSDNEDF…ESRAESQETS (128 aa)) is disordered. A Phosphothreonine modification is found at threonine 74. The segment covering 74-85 (TDSDNEDFEGFT) has biased composition (acidic residues). Serine 76 carries the phosphoserine modification. A Phosphothreonine modification is found at threonine 85. Residues serine 100, serine 103, serine 113, serine 135, serine 136, serine 183, and serine 185 each carry the phosphoserine modification. Residues 113-123 (SDEEDDDDEEE) are compositionally biased toward acidic residues. Residues 166-183 (TDLRREKSCRQPKEKEDS) are compositionally biased toward basic and acidic residues. Positions 201-223 (ALLKRAMNIKENKAMLAQLLAEL) are MYC-binding. Glycyl lysine isopeptide (Lys-Gly) (interchain with G-Cter in SUMO2) cross-links involve residues lysine 210 and lysine 213. Serine 249 is modified (phosphoserine).

In terms of assembly, interacts with MYC. Interacts (via IBM motifs) with PSIP1 (via IBD domain); phosphorylation increases its affinity for PSIP1. Post-translationally, phosphorylation increases its interaction with PSIP1.

It localises to the cytoplasm. It is found in the nucleus. Functionally, plays a role in transcriptional regulation as a repressor that inhibits monoamine oxidase A (MAOA) activity and gene expression by binding to the promoter. Plays an important oncogenic role in mediating the full transforming effect of MYC in medulloblastoma cells. Involved in apoptotic signaling pathways; May act downstream of P38-kinase and BCL-2, but upstream of CASP3/caspase-3 as well as CCND1/cyclin D1 and E2F1. This is Cell division cycle-associated 7-like protein (Cdca7l) from Rattus norvegicus (Rat).